We begin with the raw amino-acid sequence, 476 residues long: Ribosomal RNA small subunit methyltransferase F (476 aa).

S-adenosyl-L-methionine is bound by residues 125–131, Glu-149, Asp-176, and Asp-194; that span reads AAAPGSK. Cys-247 functions as the Nucleophile in the catalytic mechanism.

Belongs to the class I-like SAM-binding methyltransferase superfamily. RsmB/NOP family.

It localises to the cytoplasm. It catalyses the reaction cytidine(1407) in 16S rRNA + S-adenosyl-L-methionine = 5-methylcytidine(1407) in 16S rRNA + S-adenosyl-L-homocysteine + H(+). Its function is as follows. Specifically methylates the cytosine at position 1407 (m5C1407) of 16S rRNA. The chain is Ribosomal RNA small subunit methyltransferase F from Aeromonas salmonicida (strain A449).